A 104-amino-acid polypeptide reads, in one-letter code: Large ribosomal subunit protein uL24 (104 aa).

Belongs to the universal ribosomal protein uL24 family. Part of the 50S ribosomal subunit.

Its function is as follows. One of two assembly initiator proteins, it binds directly to the 5'-end of the 23S rRNA, where it nucleates assembly of the 50S subunit. One of the proteins that surrounds the polypeptide exit tunnel on the outside of the subunit. The polypeptide is Large ribosomal subunit protein uL24 (Cronobacter sakazakii (strain ATCC BAA-894) (Enterobacter sakazakii)).